Consider the following 162-residue polypeptide: Caveolin-2 (162 aa).

Residues 1 to 86 (MGLEKEKLEC…FELVKFIFYR (86 aa)) are Cytoplasmic-facing. Residues 87 to 107 (LLTTLLAVPAAFILGVVFGVL) constitute an intramembrane region (helical). Topologically, residues 108 to 162 (SCIHIWLVMPVTRSFLMLLPSIQVVWKSVTDMFITPLFHSMGRSLSSIQVRTSDT) are cytoplasmic.

Belongs to the caveolin family. Homooligomer.

It localises to the golgi apparatus membrane. It is found in the cell membrane. The protein localises to the membrane. The protein resides in the caveola. In terms of biological role, may act as a scaffolding protein within caveolar membranes. Interacts directly with G-protein alpha subunits and can functionally regulate their activity. The sequence is that of Caveolin-2 (cav2) from Takifugu rubripes (Japanese pufferfish).